A 173-amino-acid polypeptide reads, in one-letter code: CKLF-like MARVEL transmembrane domain-containing protein 8 (173 aa).

The region spanning 36 to 168 is the MARVEL domain; sequence FLRTLPGLLI…NTYFSFIAWR (133 aa). 4 consecutive transmembrane segments (helical) span residues 40-60, 70-90, 105-125, and 147-167; these read LPGL…TLIA, FGWV…FLII, TTVG…AAIV, and FFAF…FIAW.

The protein belongs to the chemokine-like factor family.

It is found in the membrane. This chain is CKLF-like MARVEL transmembrane domain-containing protein 8 (CMTM8), found in Bos taurus (Bovine).